A 109-amino-acid polypeptide reads, in one-letter code: uncharacterized protein (109 aa).

A helical transmembrane segment spans residues 12–32 (PNILIKGVYIFVLYGMCICIV).

It localises to the membrane. This is an uncharacterized protein from Saccharomyces cerevisiae (strain ATCC 204508 / S288c) (Baker's yeast).